The chain runs to 230 residues: Interleukin-22 receptor subunit alpha-2 (230 aa).

An N-terminal signal peptide occupies residues 1–20 (MMPKHCLLGLLIILLSSATE). Fibronectin type-III domains are found at residues 29–128 (TPQK…TKLD) and 129–230 (PPVV…VHIP). 2 disulfides stabilise this stretch: Cys77-Cys85 and Cys205-Cys226.

Belongs to the type II cytokine receptor family. In terms of tissue distribution, highly expressed in lymph nodes and at lower levels in lung, spleen, and thymus. Not expressed in kidney, liver and heart.

It localises to the secreted. Functionally, receptor for IL22. Binds to IL22, prevents interaction with the functional IL-22R complex and blocks the activity of IL22 (in vitro). May play an important role as an IL22 antagonist in the regulation of inflammatory responses. This Mus musculus (Mouse) protein is Interleukin-22 receptor subunit alpha-2 (Il22ra2).